A 480-amino-acid polypeptide reads, in one-letter code: UDP-glucose 6-dehydrogenase 4 (480 aa).

Residues 8 to 13 (GAGYVG), Asp33, Arg38, 86 to 90 (VNTPT), 127 to 128 (ST), and Glu161 contribute to the NAD(+) site. Substrate contacts are provided by residues 157–161 (EFLAE), 216–223 (KLAANAFL), and 256–269 (RIGPKFLNASVGFG). Cys272 serves as the catalytic Nucleophile. 272–275 (CFQK) contributes to the NAD(+) binding site. 334–335 (FK) is a binding site for substrate. NAD(+) is bound at residue Arg342. Ser393 is subject to Phosphoserine. Arg447 contacts substrate.

Belongs to the UDP-glucose/GDP-mannose dehydrogenase family.

The catalysed reaction is UDP-alpha-D-glucose + 2 NAD(+) + H2O = UDP-alpha-D-glucuronate + 2 NADH + 3 H(+). The protein operates within nucleotide-sugar biosynthesis; UDP-alpha-D-glucuronate biosynthesis; UDP-alpha-D-glucuronate from UDP-alpha-D-glucose: step 1/1. Involved in the biosynthesis of UDP-glucuronic acid (UDP-GlcA), providing nucleotide sugars for cell-wall polymers. In Oryza sativa subsp. japonica (Rice), this protein is UDP-glucose 6-dehydrogenase 4 (UGD4).